A 688-amino-acid polypeptide reads, in one-letter code: MLASVNSCSLPRDRSMTDRFQLVSPYSPAGDQPAAIDKLVANFEAGLAKQTLLGVTGSGKTYTIANVVQQVQKPTLVMAPNKTLAAQLYGEFKSFFPHNAVEYFVSYYDYYQPEAYVPSSDTFIEKDSSINEHIEQMRLSATKTLLSRRDSLVVATVSAIYGLGAPEDYLSLRLILSIGEHIDQRQLIRHLTDLQYTRNEFELTRGAFRVRGEVLDVFPAESDTEALRIELFDGDIEQLTLFDPLTGETLRKLQRYTVYPKTHYATTRERTLSAVDTIKEELKERLEQLYSQNKLVEAQRLAQRTQFDLEMMAEVGFCNGIENYSRHLTGKAPGEPPPTLFDYLPPDALLVIDESHVTIPQIGAMYKGDRSRKETLVEFGFRLPSALDNRPLRFEEWEARSPRSIYVSATPGPYELRESAGEVTELVVRPTGLIDPVVEIRPVGTQVDDLMSEIHERIKLGDRVLVTTLTKRMAENLTEYLGEHGIRVRYLHSDIDTVERVEIIRDLRLGKFDVLVGINLLREGLDMPEVSLVAILDADKEGFLRSTGSLIQTIGRAARNLRGKAILYADKMTRSMQAAIDESDRRREKQVEYNLEHGITPESVERPISDIMEGAREDAAEKKSGKGRSKSRQVAEETPDYRAMKPAEIAGKLKSLEQKMYQHAKDLEFEAAAQIRDQIQKLKTASLA.

The region spanning 41–429 is the Helicase ATP-binding domain; the sequence is ANFEAGLAKQ…AGEVTELVVR (389 aa). An ATP-binding site is contributed by 54–61; that stretch reads GVTGSGKT. Residues 107–130 carry the Beta-hairpin motif; that stretch reads YYDYYQPEAYVPSSDTFIEKDSSI. The Helicase C-terminal domain maps to 446–612; that stretch reads QVDDLMSEIH…SVERPISDIM (167 aa). The tract at residues 616 to 646 is disordered; it reads REDAAEKKSGKGRSKSRQVAEETPDYRAMKP. Residues 633 to 645 are compositionally biased toward basic and acidic residues; the sequence is QVAEETPDYRAMK. The UVR domain occupies 650-685; that stretch reads AGKLKSLEQKMYQHAKDLEFEAAAQIRDQIQKLKTA.

Belongs to the UvrB family. In terms of assembly, forms a heterotetramer with UvrA during the search for lesions. Interacts with UvrC in an incision complex.

It is found in the cytoplasm. Functionally, the UvrABC repair system catalyzes the recognition and processing of DNA lesions. A damage recognition complex composed of 2 UvrA and 2 UvrB subunits scans DNA for abnormalities. Upon binding of the UvrA(2)B(2) complex to a putative damaged site, the DNA wraps around one UvrB monomer. DNA wrap is dependent on ATP binding by UvrB and probably causes local melting of the DNA helix, facilitating insertion of UvrB beta-hairpin between the DNA strands. Then UvrB probes one DNA strand for the presence of a lesion. If a lesion is found the UvrA subunits dissociate and the UvrB-DNA preincision complex is formed. This complex is subsequently bound by UvrC and the second UvrB is released. If no lesion is found, the DNA wraps around the other UvrB subunit that will check the other stand for damage. The sequence is that of UvrABC system protein B from Xanthomonas oryzae pv. oryzae (strain KACC10331 / KXO85).